Here is a 344-residue protein sequence, read N- to C-terminus: Ferrochelatase (344 aa).

His196 and Glu277 together coordinate Fe cation.

Belongs to the ferrochelatase family.

It localises to the cytoplasm. It carries out the reaction heme b + 2 H(+) = protoporphyrin IX + Fe(2+). The protein operates within porphyrin-containing compound metabolism; protoheme biosynthesis; protoheme from protoporphyrin-IX: step 1/1. In terms of biological role, catalyzes the ferrous insertion into protoporphyrin IX. This Synechococcus sp. (strain JA-2-3B'a(2-13)) (Cyanobacteria bacterium Yellowstone B-Prime) protein is Ferrochelatase.